The sequence spans 524 residues: M-phase inducer phosphatase 1 (524 aa).

Positions 74–84 match the Phosphodegron motif; it reads MGSSESTDSGF. Serine 76 bears the Phosphoserine; by CHEK1 mark. Phosphoserine; by NEK11 is present on residues serine 79, serine 82, and serine 88. Serine 107 is subject to Phosphoserine. Serine 124 is subject to Phosphoserine; by CHEK1 and CHEK2. The short motif at 141-143 is the KEN box element; that stretch reads KEN. Serine 178 carries the post-translational modification Phosphoserine; by CHEK1. Residues 264 to 317 form a disordered region; the sequence is LCSSSTRSVLKRPERSQEESPPGSTKRRKSMSGASPKESTNPEKAHETLHQSLS. Serine 279 and serine 293 each carry phosphoserine; by CHEK1 and CHEK2. Residues 303–312 show a composition bias toward basic and acidic residues; the sequence is TNPEKAHETL. Phosphoserine is present on serine 321. The Rhodanese domain occupies 376–482; the sequence is LIKEFVIIDC…FFMKCQSYCE (107 aa). Cysteine 431 is an active-site residue. The residue at position 507 (threonine 507) is a Phosphothreonine; by CHEK1. Serine 513 and serine 519 each carry phosphoserine; by PLK3.

Belongs to the MPI phosphatase family. Interacts with CCNB1/cyclin B1. Interacts with YWHAE/14-3-3 epsilon when phosphorylated. Interacts with CUL1 specifically when CUL1 is neddylated and active. Interacts with BTRC/BTRCP1 and FBXW11/BTRCP2. Interactions with CUL1, BTRC and FBXW11 are enhanced upon DNA damage. Interacts with CHEK2; mediates CDC25A phosphorylation and degradation in response to infrared-induced DNA damages. Interacts with HSP90AB1; prevents heat shock-mediated CDC25A degradation and contributes to cell cycle progression. Phosphorylated by CHEK1 on Ser-76, Ser-124, Ser-178, Ser-279, Ser-293 and Thr-507 during checkpoint mediated cell cycle arrest. Also phosphorylated by CHEK2 on Ser-124, Ser-279, and Ser-293 during checkpoint mediated cell cycle arrest. Phosphorylation on Ser-178 and Thr-507 creates binding sites for YWHAE/14-3-3 epsilon which inhibits CDC25A. Phosphorylation on Ser-76, Ser-124, Ser-178, Ser-279 and Ser-293 may also promote ubiquitin-dependent proteolysis of CDC25A by the SCF complex. Phosphorylation of CDC25A at Ser-76 by CHEK1 primes it for subsequent phosphorylation at Ser-79, Ser-82 and Ser-88 by NEK11. Phosphorylation by NEK11 is required for BTRC-mediated polyubiquitination and degradation. Phosphorylation by PIM1 leads to an increase in phosphatase activity. Phosphorylated by PLK3 following DNA damage, leading to promote its ubiquitination and degradation. Post-translationally, ubiquitinated by the anaphase promoting complex/cyclosome (APC/C) ubiquitin ligase complex that contains FZR1/CDH1 during G1 phase leading to its degradation by the proteasome. Ubiquitinated by a SCF complex containing BTRC and FBXW11 during S phase leading to its degradation by the proteasome. Deubiquitination by USP17L2/DUB3 leads to its stabilization.

The catalysed reaction is O-phospho-L-tyrosyl-[protein] + H2O = L-tyrosyl-[protein] + phosphate. Stimulated by B-type cyclins. Stimulated by PIM1-mediated phosphorylation. In terms of biological role, tyrosine protein phosphatase which functions as a dosage-dependent inducer of mitotic progression. Directly dephosphorylates CDK1 and stimulates its kinase activity. Also dephosphorylates CDK2 in complex with cyclin-E, in vitro. This is M-phase inducer phosphatase 1 (CDC25A) from Homo sapiens (Human).